A 164-amino-acid polypeptide reads, in one-letter code: MSYYDNILEIDSNLDGNGLCIGIVMSRFNIDVSEGLLGACTAELTRLGVQEADIVLTTVPGALEIPVALQKLAESDRFDALIALGAVIRGETYHFEVVANESARGLAAVGREYNIPIANGILTTDDEDQATARMAEKGGETARVAIEMANLVLTLDEMDQSAPT.

5-amino-6-(D-ribitylamino)uracil-binding positions include F28, 62–64, and 86–88; these read ALE and AVI. Residue 91–92 coordinates (2S)-2-hydroxy-3-oxobutyl phosphate; the sequence is ET. H94 acts as the Proton donor in catalysis. Residue N119 coordinates 5-amino-6-(D-ribitylamino)uracil. R133 is a (2S)-2-hydroxy-3-oxobutyl phosphate binding site.

It belongs to the DMRL synthase family.

The catalysed reaction is (2S)-2-hydroxy-3-oxobutyl phosphate + 5-amino-6-(D-ribitylamino)uracil = 6,7-dimethyl-8-(1-D-ribityl)lumazine + phosphate + 2 H2O + H(+). Its pathway is cofactor biosynthesis; riboflavin biosynthesis; riboflavin from 2-hydroxy-3-oxobutyl phosphate and 5-amino-6-(D-ribitylamino)uracil: step 1/2. Catalyzes the formation of 6,7-dimethyl-8-ribityllumazine by condensation of 5-amino-6-(D-ribitylamino)uracil with 3,4-dihydroxy-2-butanone 4-phosphate. This is the penultimate step in the biosynthesis of riboflavin. The protein is 6,7-dimethyl-8-ribityllumazine synthase of Nitrosomonas europaea (strain ATCC 19718 / CIP 103999 / KCTC 2705 / NBRC 14298).